Consider the following 178-residue polypeptide: Caveolin-1 (178 aa).

Position 2 is an N-acetylserine (Ser2). The residue at position 2 (Ser2) is a Phosphoserine. Residues 2 to 94 (SGGKYVDSEG…WKASFTTFTV (93 aa)) form a required for homooligomerization region. The Cytoplasmic portion of the chain corresponds to 2-104 (SGGKYVDSEG…TKYWFYRLLS (103 aa)). At Lys5 the chain carries N6-acetyllysine; alternate. A Glycyl lysine isopeptide (Lys-Gly) (interchain with G-Cter in ubiquitin); alternate cross-link involves residue Lys5. Tyr6 bears the Phosphotyrosine mark. Ser9 carries the phosphoserine modification. A Phosphotyrosine; by ABL1 modification is found at Tyr14. Position 25 is a phosphotyrosine (Tyr25). Residues Lys26 and Lys30 each participate in a glycyl lysine isopeptide (Lys-Gly) (interchain with G-Cter in ubiquitin) cross-link. Ser37 carries the phosphoserine modification. Residues Lys39, Lys47, and Lys57 each participate in a glycyl lysine isopeptide (Lys-Gly) (interchain with G-Cter in ubiquitin) cross-link. The interval 82-94 (DGIWKASFTTFTV) is interaction with CAVIN3. The helical intramembrane region spans 105–125 (ALFGIPMALIWGIYFAILSFL). At 126–178 (HIWAVVPCIKSFLIEIQCISRVYSIYVHTFCDPFFEAVGKIFSNIRINMQKET) the chain is on the cytoplasmic side. The interacts with SPRY1, SPRY2, SPRY3 and SPRY4 stretch occupies residues 131–142 (VPCIKSFLIEIQ). 3 S-palmitoyl cysteine lipidation sites follow: Cys133, Cys143, and Cys156. The tract at residues 149–160 (SIYVHTFCDPFF) is interacts with SPRY1, SPRY2, and SPRY4. Residues 167–178 (FSNIRINMQKET) are interacts with SPRY1, SPRY2, SPRY3 and SPRY4.

Belongs to the caveolin family. As to quaternary structure, homooligomer. Interacts with BMX, BTK, GLIPR2, NOSTRIN, SNAP25 and STX1A. Interacts with PACSIN2; this interaction induces membrane tubulation. Interacts (via the N-terminus) with DPP4; the interaction is direct. Interacts with SLC7A9. Interacts with CTNNB1, CDH1 and JUP. Interacts with TGFBR1. Interacts with CAVIN3 (via leucine-zipper domain) in a cholesterol-sensitive manner. Interacts with CAVIN1. Interacts with EHD2 in a cholesterol-dependent manner. Forms a ternary complex with UBXN6 and VCP; mediates CAV1 targeting to lysosomes for degradation. Interacts with ABCG1; this interaction regulates ABCG1-mediated cholesterol efflux. Interacts with NEU3; this interaction enhances NEU3 sialidase activity within caveola. Interacts (via C-terminus) with SPRY1, SPRY2 (via C-terminus), SPRY3, and SPRY4. Interacts with IGFBP5; this interaction allows trafficking of IGFBP5 from the plasma membrane to the nucleus. In terms of processing, phosphorylation of isoform Beta on serine residues is constitutive. Phosphorylated at Tyr-14 by ABL1 in response to oxidative stress. Post-translationally, ubiquitinated. Undergo monoubiquitination and multi- and/or polyubiquitination. Monoubiquitination of N-terminal lysines promotes integration in a ternary complex with UBXN6 and VCP which promotes oligomeric CAV1 targeting to lysosomes for degradation. Ubiquitinated by ZNRF1; leading to degradation and modulation of the TLR4-mediated immune response.

The protein localises to the golgi apparatus membrane. The protein resides in the cell membrane. Its subcellular location is the membrane. It is found in the caveola. It localises to the membrane raft. The protein localises to the golgi apparatus. The protein resides in the trans-Golgi network. Its function is as follows. May act as a scaffolding protein within caveolar membranes. Forms a stable heterooligomeric complex with CAV2 that targets to lipid rafts and drives caveolae formation. Mediates the recruitment of CAVIN proteins (CAVIN1/2/3/4) to the caveolae. Interacts directly with G-protein alpha subunits and can functionally regulate their activity. Involved in the costimulatory signal essential for T-cell receptor (TCR)-mediated T-cell activation. Its binding to DPP4 induces T-cell proliferation and NF-kappa-B activation in a T-cell receptor/CD3-dependent manner. Recruits CTNNB1 to caveolar membranes and may regulate CTNNB1-mediated signaling through the Wnt pathway. Negatively regulates TGFB1-mediated activation of SMAD2/3 by mediating the internalization of TGFBR1 from membrane rafts leading to its subsequent degradation. Binds 20(S)-hydroxycholesterol (20(S)-OHC). The sequence is that of Caveolin-1 (CAV1) from Canis lupus familiaris (Dog).